A 367-amino-acid chain; its full sequence is Chorismate synthase (367 aa).

NADP(+)-binding residues include arginine 48 and arginine 54. Residues 125–127 (RSS), 238–239 (NA), glycine 278, 293–297 (KPTSS), and arginine 319 each bind FMN.

This sequence belongs to the chorismate synthase family. In terms of assembly, homotetramer. FMNH2 serves as cofactor.

The enzyme catalyses 5-O-(1-carboxyvinyl)-3-phosphoshikimate = chorismate + phosphate. The protein operates within metabolic intermediate biosynthesis; chorismate biosynthesis; chorismate from D-erythrose 4-phosphate and phosphoenolpyruvate: step 7/7. Catalyzes the anti-1,4-elimination of the C-3 phosphate and the C-6 proR hydrogen from 5-enolpyruvylshikimate-3-phosphate (EPSP) to yield chorismate, which is the branch point compound that serves as the starting substrate for the three terminal pathways of aromatic amino acid biosynthesis. This reaction introduces a second double bond into the aromatic ring system. The chain is Chorismate synthase from Stenotrophomonas maltophilia (strain K279a).